A 115-amino-acid polypeptide reads, in one-letter code: Non-specific lipid-transfer protein 3 (115 aa).

The first 23 residues, 1 to 23 (MAFALRFFTCLVLTVCIVASVDA), serve as a signal peptide directing secretion. Disulfide bonds link Cys-27–Cys-74, Cys-37–Cys-51, Cys-52–Cys-97, and Cys-72–Cys-111.

Belongs to the plant LTP family.

In terms of biological role, plant non-specific lipid-transfer proteins transfer phospholipids as well as galactolipids across membranes. May play a role in wax or cutin deposition in the cell walls of expanding epidermal cells and certain secretory tissues. The chain is Non-specific lipid-transfer protein 3 (LTP3) from Arabidopsis thaliana (Mouse-ear cress).